A 306-amino-acid polypeptide reads, in one-letter code: tRNA dimethylallyltransferase 2 (306 aa).

19–26 (GATASGKT) is an ATP binding site. Residue 21–26 (TASGKT) coordinates substrate. The tract at residues 44-47 (DSRQ) is interaction with substrate tRNA.

It belongs to the IPP transferase family. Monomer. It depends on Mg(2+) as a cofactor.

The catalysed reaction is adenosine(37) in tRNA + dimethylallyl diphosphate = N(6)-dimethylallyladenosine(37) in tRNA + diphosphate. Functionally, catalyzes the transfer of a dimethylallyl group onto the adenine at position 37 in tRNAs that read codons beginning with uridine, leading to the formation of N6-(dimethylallyl)adenosine (i(6)A). The sequence is that of tRNA dimethylallyltransferase 2 from Citrifermentans bemidjiense (strain ATCC BAA-1014 / DSM 16622 / JCM 12645 / Bem) (Geobacter bemidjiensis).